We begin with the raw amino-acid sequence, 231 residues long: LexA repressor (231 aa).

The segment at residues 31-51 is a DNA-binding region (H-T-H motif); it reads RAEIATEFGFRSANAAEEHLQ. Active-site for autocatalytic cleavage activity residues include Ser148 and Lys185.

This sequence belongs to the peptidase S24 family. In terms of assembly, homodimer.

The enzyme catalyses Hydrolysis of Ala-|-Gly bond in repressor LexA.. Its function is as follows. Represses a number of genes involved in the response to DNA damage (SOS response), including recA and lexA. In the presence of single-stranded DNA, RecA interacts with LexA causing an autocatalytic cleavage which disrupts the DNA-binding part of LexA, leading to derepression of the SOS regulon and eventually DNA repair. The polypeptide is LexA repressor (Leptothrix cholodnii (strain ATCC 51168 / LMG 8142 / SP-6) (Leptothrix discophora (strain SP-6))).